A 31-amino-acid chain; its full sequence is Sarcolipin (31 aa).

Topologically, residues 1-7 are cytoplasmic; it reads MGINTRE. The helical transmembrane segment at 8–26 threads the bilayer; the sequence is LFLNFTIVLITVILMWLLV. The Lumenal segment spans residues 27–31; that stretch reads RSYQY.

Belongs to the sarcolipin family. As to quaternary structure, homooligomer. Can also form heterooligomers with other sarcoplasmic/endoplasmic reticulum calcium ATPase (SERCA) regulators ARLN, ERLN, PLN and STRIT1/DWORF. Monomer. Interacts with calcium ATPase ATP2A1/SERCA1. Interacts as a monomer with ATP2A2/SERCA2; the interaction decreases ATP2A2 Ca(2+) affinity. Interacts with VMP1; VMP1 competes with PLN and SLN to prevent them from forming an inhibitory complex with ATP2A2.

Its subcellular location is the sarcoplasmic reticulum membrane. The protein resides in the endoplasmic reticulum membrane. Its function is as follows. Reversibly inhibits the activity of ATP2A1/SERCA1 and ATP2A2/SERCA2 in sarcoplasmic reticulum by decreasing the apparent affinity of the ATPase for Ca(2+). Also inhibits the activity of ATP2A3/SERCA3. Modulates calcium re-uptake during muscle relaxation and plays an important role in calcium homeostasis in muscle. Required for muscle-based, non-shivering thermogenesis. The sequence is that of Sarcolipin from Homo sapiens (Human).